A 210-amino-acid chain; its full sequence is Pre-mRNA-splicing factor 38 (210 aa).

Positions 181-210 are disordered; that stretch reads PLSSSSDEEDDDEEQISKLESNEGAVDRNI. Positions 195–210 are enriched in basic and acidic residues; sequence QISKLESNEGAVDRNI.

This sequence belongs to the PRP38 family. Component of the 25S U4/U6.U5 tri-snRNP particle, a subcomplex of the spliceosome.

It is found in the nucleus. In terms of biological role, required for pre-mRNA splicing and maintenance of stable U6 small nuclear RNA levels. Implicated in the formation of stable and biologically active snRNP structures. As part of the U4/U6.U5 tri-snRNP particle, dispensible for spliceosome assembly, but required for conformational changes, which result in U4 snRNA release and the subsequent catalytic activation of the spliceosome. In Schizosaccharomyces pombe (strain 972 / ATCC 24843) (Fission yeast), this protein is Pre-mRNA-splicing factor 38.